The primary structure comprises 156 residues: Small ribosomal subunit protein uS7 (156 aa).

It belongs to the universal ribosomal protein uS7 family. As to quaternary structure, part of the 30S ribosomal subunit. Contacts proteins S9 and S11.

Functionally, one of the primary rRNA binding proteins, it binds directly to 16S rRNA where it nucleates assembly of the head domain of the 30S subunit. Is located at the subunit interface close to the decoding center, probably blocks exit of the E-site tRNA. This chain is Small ribosomal subunit protein uS7, found in Acaryochloris marina (strain MBIC 11017).